The following is a 252-amino-acid chain: Hydroxyacylglutathione hydrolase (252 aa).

Zn(2+) contacts are provided by His-52, His-54, Asp-56, His-57, His-107, Asp-128, and His-166.

The protein belongs to the metallo-beta-lactamase superfamily. Glyoxalase II family. Monomer. The cofactor is Zn(2+).

It carries out the reaction an S-(2-hydroxyacyl)glutathione + H2O = a 2-hydroxy carboxylate + glutathione + H(+). It functions in the pathway secondary metabolite metabolism; methylglyoxal degradation; (R)-lactate from methylglyoxal: step 2/2. Functionally, thiolesterase that catalyzes the hydrolysis of S-D-lactoyl-glutathione to form glutathione and D-lactic acid. The chain is Hydroxyacylglutathione hydrolase from Neisseria meningitidis serogroup C (strain 053442).